Consider the following 100-residue polypeptide: Putative pterin-4-alpha-carbinolamine dehydratase (100 aa).

The protein belongs to the pterin-4-alpha-carbinolamine dehydratase family.

The enzyme catalyses (4aS,6R)-4a-hydroxy-L-erythro-5,6,7,8-tetrahydrobiopterin = (6R)-L-erythro-6,7-dihydrobiopterin + H2O. The protein is Putative pterin-4-alpha-carbinolamine dehydratase of Afipia carboxidovorans (strain ATCC 49405 / DSM 1227 / KCTC 32145 / OM5) (Oligotropha carboxidovorans).